A 257-amino-acid polypeptide reads, in one-letter code: Large ribosomal subunit protein uL2 (257 aa).

Residues 207-230 (VEHPFGGGNHQHIGKPSTIRRDAP) form a disordered region.

Belongs to the universal ribosomal protein uL2 family. As to quaternary structure, component of the large ribosomal subunit.

It is found in the cytoplasm. Functionally, component of the large ribosomal subunit. The ribosome is a large ribonucleoprotein complex responsible for the synthesis of proteins in the cell. The polypeptide is Large ribosomal subunit protein uL2 (rpl8) (Danio rerio (Zebrafish)).